We begin with the raw amino-acid sequence, 241 residues long: Uridylate kinase (241 aa).

15–18 (KLSG) is an ATP binding site. Residues 23–28 (GTEGFG) are involved in allosteric activation by GTP. Gly57 contacts UMP. 2 residues coordinate ATP: Gly58 and Arg62. UMP is bound by residues Asp77 and 138 to 145 (TGNPFFTT). The ATP site is built by Thr165, Phe171, and Asp174.

Belongs to the UMP kinase family. Homohexamer.

The protein resides in the cytoplasm. It carries out the reaction UMP + ATP = UDP + ADP. It participates in pyrimidine metabolism; CTP biosynthesis via de novo pathway; UDP from UMP (UMPK route): step 1/1. Its activity is regulated as follows. Allosterically activated by GTP. Inhibited by UTP. Catalyzes the reversible phosphorylation of UMP to UDP. This is Uridylate kinase from Escherichia coli O139:H28 (strain E24377A / ETEC).